The primary structure comprises 123 residues: Large ribosomal subunit protein uL14c (123 aa).

The protein belongs to the universal ribosomal protein uL14 family. As to quaternary structure, part of the 50S ribosomal subunit. Interacts with IOJAP.

Its subcellular location is the plastid. The protein localises to the chloroplast. Its function is as follows. Binds to 23S rRNA. The sequence is that of Large ribosomal subunit protein uL14c from Zea mays (Maize).